An 855-amino-acid polypeptide reads, in one-letter code: DNA mismatch repair protein MutS (855 aa).

615–622 lines the ATP pocket; that stretch reads GPNMGGKS.

This sequence belongs to the DNA mismatch repair MutS family.

In terms of biological role, this protein is involved in the repair of mismatches in DNA. It is possible that it carries out the mismatch recognition step. This protein has a weak ATPase activity. This chain is DNA mismatch repair protein MutS, found in Aliivibrio salmonicida (strain LFI1238) (Vibrio salmonicida (strain LFI1238)).